The primary structure comprises 374 residues: MTQNHYTTSIFANCSKHYEFEILLETCTNSTNPCHAVSQIQSAITIAYVDYYTSVALFSIAALLDIYCLIITIPLYRRMKDDSKKKYVFLITRCISGLLLVVAWLLIQCIYLRFIAPSQDNLPYYVLALALNIGSTYVLLGSYVGMAGILYLGVLNPIAFNQHLTLRIVYIAVCIIFVISIFISIPLAIFQALMTVPTSSMSCTDTACAPLITLINFVLVFGSLITTTLTLTFVLISLCRHRKEFKKLDTTSNTSLNSAVRLLKFTLFAVLLLVAAEVIPFVISETKKKHSVVTGCYYFYHSGKVIQYAVFALTESSIWSIALIIDPLINIIFDRTVSKKATDQVKWMRKSCVGLVRKVTKRSNPENFTETSEI.

Over 1–54 (MTQNHYTTSIFANCSKHYEFEILLETCTNSTNPCHAVSQIQSAITIAYVDYYTS) the chain is Extracellular. Residues 55 to 75 (VALFSIAALLDIYCLIITIPL) form a helical membrane-spanning segment. At 76 to 86 (YRRMKDDSKKK) the chain is on the cytoplasmic side. The helical transmembrane segment at 87-107 (YVFLITRCISGLLLVVAWLLI) threads the bilayer. The Extracellular portion of the chain corresponds to 108–137 (QCIYLRFIAPSQDNLPYYVLALALNIGSTY). A helical membrane pass occupies residues 138-158 (VLLGSYVGMAGILYLGVLNPI). Residues 159-169 (AFNQHLTLRIV) are Cytoplasmic-facing. The chain crosses the membrane as a helical span at residues 170–190 (YIAVCIIFVISIFISIPLAIF). The Extracellular portion of the chain corresponds to 191–216 (QALMTVPTSSMSCTDTACAPLITLIN). The helical transmembrane segment at 217-237 (FVLVFGSLITTTLTLTFVLIS) threads the bilayer. The Cytoplasmic portion of the chain corresponds to 238-262 (LCRHRKEFKKLDTTSNTSLNSAVRL). A helical membrane pass occupies residues 263–283 (LKFTLFAVLLLVAAEVIPFVI). Over 284–304 (SETKKKHSVVTGCYYFYHSGK) the chain is Extracellular. A helical membrane pass occupies residues 305–325 (VIQYAVFALTESSIWSIALII). At 326–374 (DPLINIIFDRTVSKKATDQVKWMRKSCVGLVRKVTKRSNPENFTETSEI) the chain is on the cytoplasmic side.

The protein belongs to the G-protein coupled receptor 1 family. B0244 subfamily.

It localises to the cell membrane. The protein is Putative G-protein coupled receptor-like protein B0244.6 of Caenorhabditis elegans.